A 430-amino-acid chain; its full sequence is Adenylosuccinate synthetase (430 aa).

GTP-binding positions include 13–19 (GDEGKGK) and 41–43 (GHT). Asp14 functions as the Proton acceptor in the catalytic mechanism. Asp14 and Gly41 together coordinate Mg(2+). IMP is bound by residues 14-17 (DEGK), 39-42 (NAGH), Thr130, Arg144, Gln225, Thr240, and Arg304. His42 (proton donor) is an active-site residue. 300 to 306 (STTGRAR) serves as a coordination point for substrate. GTP-binding positions include Arg306, 332-334 (KLD), and 414-416 (STG).

Belongs to the adenylosuccinate synthetase family. Homodimer. Mg(2+) is required as a cofactor.

Its subcellular location is the cytoplasm. The catalysed reaction is IMP + L-aspartate + GTP = N(6)-(1,2-dicarboxyethyl)-AMP + GDP + phosphate + 2 H(+). It functions in the pathway purine metabolism; AMP biosynthesis via de novo pathway; AMP from IMP: step 1/2. Plays an important role in the de novo pathway of purine nucleotide biosynthesis. Catalyzes the first committed step in the biosynthesis of AMP from IMP. In Thioalkalivibrio sulfidiphilus (strain HL-EbGR7), this protein is Adenylosuccinate synthetase.